We begin with the raw amino-acid sequence, 398 residues long: Flavohemoprotein (398 aa).

Residues 9–147 (QLTPAQIKII…LAKLLIDLEA (139 aa)) enclose the Globin domain. H93 is a heme b binding site. Residues Y103 and E146 each act as charge relay system in the active site. Positions 155–398 (WRWFKDFKVT…KLEYFGPYDP (244 aa)) are reductase. Residues 156–263 (RWFKDFKVTR…APPAGNFVYD (108 aa)) enclose the FAD-binding FR-type domain. FAD is bound by residues Y196 and 212–215 (REYS). 276 to 281 (GIGITP) is a binding site for NADP(+). Residue 395–398 (PYDP) participates in FAD binding.

It belongs to the globin family. FAD is required as a cofactor. Heme b serves as cofactor.

The protein localises to the cytoplasm. The catalysed reaction is 2 nitric oxide + NADPH + 2 O2 = 2 nitrate + NADP(+) + H(+). The enzyme catalyses 2 nitric oxide + NADH + 2 O2 = 2 nitrate + NAD(+) + H(+). With respect to regulation, inhibited by imidazoles. Nitric oxide dioxygenase involved in NO detoxification in an aerobic process, termed nitric oxide dioxygenase (NOD) reaction that utilizes O(2) and NAD(P)H to convert NO to nitrate, which protects the fungus from various noxious nitrogen compounds. Therefore, plays a central role in the inducible response to nitrosative stress. Plays a role in virulence since nitric oxide is generated by macrophages of the host immune system. This is Flavohemoprotein (YHB1) from Candida albicans (strain SC5314 / ATCC MYA-2876) (Yeast).